The following is a 394-amino-acid chain: Arogenate dehydratase 2 (394 aa).

The disordered stretch occupies residues 1 to 24; sequence MAATTTLRSPKIPHPPPESTPSNL. The N-terminal 47 residues, 1–47, are a transit peptide targeting the chloroplast; the sequence is MAATTTLRSPKIPHPPPESTPSNLSYLSQISLTPVPKRRRFISIYAC. One can recognise a Prephenate dehydratase domain in the interval 108–283; sequence RVAYQGVRGA…NVTRFLMLAR (176 aa). The region spanning 297–388 is the ACT domain; that stretch reads SVVFSLDEGP…TFLRVLGSYP (92 aa).

Expressed at low levels in petals (corollas and tubes), stems, leaves, pistils, stamens, ovaries and sepals.

Its subcellular location is the plastid. The protein localises to the chloroplast stroma. The catalysed reaction is prephenate + H(+) = 3-phenylpyruvate + CO2 + H2O. It catalyses the reaction L-arogenate + H(+) = L-phenylalanine + CO2 + H2O. The protein operates within amino-acid biosynthesis; L-phenylalanine biosynthesis; L-phenylalanine from L-arogenate: step 1/1. Functionally, converts the prephenate and L-arogenate produced from the shikimate-chorismate pathway into 3-phenylpyruvate and phenylalanine (Phe), respectively. Involved in floral volatile benzenoids and phenylpropanoids (FVBP) production. This chain is Arogenate dehydratase 2, found in Petunia hybrida (Petunia).